The chain runs to 354 residues: ATPase GET3 (354 aa).

Residue 26–33 participates in ATP binding; sequence KGGVGKTT. The active site involves D57. Residues E245 and N272 each contribute to the ATP site. Zn(2+) is bound by residues C285 and C288.

The protein belongs to the arsA ATPase family. In terms of assembly, homodimer. Component of the Golgi to ER traffic (GET) complex, which is composed of GET1, GET2 and GET3. Within the complex, GET1 and GET2 form a heterotetramer which is stabilized by phosphatidylinositol binding and which binds to the GET3 homodimer. Interacts with the chloride channel protein GEF1.

The protein localises to the cytoplasm. Its subcellular location is the endoplasmic reticulum. It localises to the golgi apparatus. ATPase required for the post-translational delivery of tail-anchored (TA) proteins to the endoplasmic reticulum. Recognizes and selectively binds the transmembrane domain of TA proteins in the cytosol. This complex then targets to the endoplasmic reticulum by membrane-bound receptors GET1 and GET2, where the tail-anchored protein is released for insertion. This process is regulated by ATP binding and hydrolysis. ATP binding drives the homodimer towards the closed dimer state, facilitating recognition of newly synthesized TA membrane proteins. ATP hydrolysis is required for insertion. Subsequently, the homodimer reverts towards the open dimer state, lowering its affinity for the GET1-GET2 receptor, and returning it to the cytosol to initiate a new round of targeting. Cooperates with the HDEL receptor ERD2 to mediate the ATP-dependent retrieval of resident ER proteins that contain a C-terminal H-D-E-L retention signal from the Golgi to the ER. Involved in low-level resistance to the oxyanions arsenite and arsenate, and in heat tolerance. The polypeptide is ATPase GET3 (Saccharomyces cerevisiae (strain RM11-1a) (Baker's yeast)).